Reading from the N-terminus, the 498-residue chain is Peptidase inhibitor 16 (498 aa).

The first 29 residues, 1–29, serve as a signal peptide directing secretion; that stretch reads MHGSCSPWVMLPPPLLLLLLLIATGPTTA. The region spanning 39–167 is the SCP domain; the sequence is VDLHNQYRAQ…ANIHLLVCNY (129 aa). Asn-116 is a glycosylation site (N-linked (GlcNAc...) asparagine). 3 disordered regions span residues 204–277, 317–407, and 419–467; these read NPEK…GPSS, PKSM…SPLS, and ERGG…ENPE. Polar residues-rich tracts occupy residues 218-277 and 344-353; these read VPST…GPSS and LTESGESVPQ. Positions 367 to 380 are enriched in low complexity; the sequence is PEAILPEAEAAPTE. Over residues 383-397 the composition is skewed to basic and acidic residues; that stretch reads VELREPEAESPKAES. The segment covering 437 to 447 has biased composition (polar residues); it reads SLPTFPSASGN. Residue Asn-447 is glycosylated (N-linked (GlcNAc...) asparagine).

Belongs to the CRISP family. As to quaternary structure, interacts with PSP94/MSMB. In terms of processing, N-glycosylated. As to expression, expressed strongly in aorta and skin, and weakly in adipose tissue (at protein level). In heart, found in the extracellular space surrounding cardiomyocytes (at protein level).

Its subcellular location is the secreted. In terms of biological role, may inhibit cardiomyocyte growth. This is Peptidase inhibitor 16 (Pi16) from Mus musculus (Mouse).